The chain runs to 757 residues: Xaa-Pro dipeptidyl-peptidase (757 aa).

Residues S348, D468, and H498 each act as charge relay system in the active site.

It belongs to the peptidase S15 family. In terms of assembly, homodimer.

The protein localises to the cytoplasm. The enzyme catalyses Hydrolyzes Xaa-Pro-|- bonds to release unblocked, N-terminal dipeptides from substrates including Ala-Pro-|-p-nitroanilide and (sequentially) Tyr-Pro-|-Phe-Pro-|-Gly-Pro-|-Ile.. In terms of biological role, removes N-terminal dipeptides sequentially from polypeptides having unsubstituted N-termini provided that the penultimate residue is proline. The chain is Xaa-Pro dipeptidyl-peptidase from Streptococcus pneumoniae (strain Hungary19A-6).